The chain runs to 404 residues: D-galactonate dehydratase family member Ent638_1932 (404 aa).

Substrate is bound by residues N37 and H122. The active-site Proton donor/acceptor is the Y159. A Mg(2+)-binding site is contributed by D212. The Proton donor/acceptor role is filled by H214. Residues E238 and E264 each contribute to the Mg(2+) site. Substrate-binding residues include E264, R285, H314, D318, and E341.

This sequence belongs to the mandelate racemase/muconate lactonizing enzyme family. GalD subfamily. Mg(2+) is required as a cofactor.

The enzyme catalyses D-mannonate = 2-dehydro-3-deoxy-D-gluconate + H2O. Functionally, has low D-mannonate dehydratase activity (in vitro), suggesting that this is not a physiological substrate and that it has no significant role in D-mannonate degradation in vivo. Has no detectable activity with a panel of 70 other acid sugars (in vitro). This Enterobacter sp. (strain 638) protein is D-galactonate dehydratase family member Ent638_1932.